The primary structure comprises 376 residues: O-demethylpuromycin-O-methyltransferase (376 aa).

A disordered region spans residues 1-28 (MAPTEATRGGPADPAPAPEAHRGGHTEH). Positions 19 to 28 (EAHRGGHTEH) are enriched in basic and acidic residues. Residues aspartate 235 and 261-263 (GDF) each bind S-adenosyl-L-methionine. The active-site Proton acceptor is histidine 281.

The protein belongs to the class I-like SAM-binding methyltransferase superfamily. Cation-independent O-methyltransferase family.

The catalysed reaction is O-demethylpuromycin + S-adenosyl-L-methionine = puromycin + S-adenosyl-L-homocysteine + H(+). This Streptomyces alboniger protein is O-demethylpuromycin-O-methyltransferase (dmpM).